A 106-amino-acid polypeptide reads, in one-letter code: Large ribosomal subunit protein bL21c (106 aa).

This sequence belongs to the bacterial ribosomal protein bL21 family. Part of the 50S ribosomal subunit.

It localises to the plastid. The protein resides in the chloroplast. This protein binds to 23S rRNA. This is Large ribosomal subunit protein bL21c from Gracilaria tenuistipitata var. liui (Red alga).